Here is a 125-residue protein sequence, read N- to C-terminus: Protein ApaG (125 aa).

An ApaG domain is found at 3–125 (TAVTEGIEVT…FPLVVPGTLN (123 aa)).

This is Protein ApaG from Anaeromyxobacter sp. (strain K).